The following is a 360-amino-acid chain: Thiol protease SEN102 (360 aa).

The signal sequence occupies residues M1–A20. A propeptide spans Q21 to S133 (activation peptide). 3 disulfide bridges follow: C151/C193, C185/C225, and C283/C335. Residue C154 is part of the active site. Catalysis depends on residues H289 and N310. A glycan (N-linked (GlcNAc...) asparagine) is linked at N353. The Prevents secretion from ER motif lies at R357–L360.

The protein belongs to the peptidase C1 family.

The protein resides in the endoplasmic reticulum lumen. The chain is Thiol protease SEN102 (SEN102) from Hemerocallis sp. (Daylily).